A 192-amino-acid chain; its full sequence is Orotate phosphoribosyltransferase (192 aa).

116 to 124 contributes to the 5-phospho-alpha-D-ribose 1-diphosphate binding site; that stretch reads EDIVTTGLS. Threonine 120 and arginine 148 together coordinate orotate.

It belongs to the purine/pyrimidine phosphoribosyltransferase family. PyrE subfamily. In terms of assembly, homodimer. It depends on Mg(2+) as a cofactor.

It catalyses the reaction orotidine 5'-phosphate + diphosphate = orotate + 5-phospho-alpha-D-ribose 1-diphosphate. Its pathway is pyrimidine metabolism; UMP biosynthesis via de novo pathway; UMP from orotate: step 1/2. In terms of biological role, catalyzes the transfer of a ribosyl phosphate group from 5-phosphoribose 1-diphosphate to orotate, leading to the formation of orotidine monophosphate (OMP). This chain is Orotate phosphoribosyltransferase, found in Brucella anthropi (strain ATCC 49188 / DSM 6882 / CCUG 24695 / JCM 21032 / LMG 3331 / NBRC 15819 / NCTC 12168 / Alc 37) (Ochrobactrum anthropi).